A 543-amino-acid chain; its full sequence is CTP synthase (543 aa).

The interval 1–266 (MTKFIFVTGG…DDIICERFGI (266 aa)) is amidoligase domain. S13 lines the CTP pocket. S13 contacts UTP. Residues 14-19 (SLGKGI) and D71 contribute to the ATP site. Residues D71 and E140 each contribute to the Mg(2+) site. Residues 147 to 149 (DIE), 187 to 192 (KTKPTQ), and K223 contribute to the CTP site. Residues 187-192 (KTKPTQ) and K223 contribute to the UTP site. The Glutamine amidotransferase type-1 domain maps to 291–543 (TVAIVGKYVE…VKAAIDHQNI (253 aa)). G354 lines the L-glutamine pocket. The Nucleophile; for glutamine hydrolysis role is filled by C381. L-glutamine-binding positions include 382–385 (LGMQ), E404, and R471. Residues H516 and E518 contribute to the active site.

Belongs to the CTP synthase family. As to quaternary structure, homotetramer.

The catalysed reaction is UTP + L-glutamine + ATP + H2O = CTP + L-glutamate + ADP + phosphate + 2 H(+). It carries out the reaction L-glutamine + H2O = L-glutamate + NH4(+). It catalyses the reaction UTP + NH4(+) + ATP = CTP + ADP + phosphate + 2 H(+). The protein operates within pyrimidine metabolism; CTP biosynthesis via de novo pathway; CTP from UDP: step 2/2. Its activity is regulated as follows. Allosterically activated by GTP, when glutamine is the substrate; GTP has no effect on the reaction when ammonia is the substrate. The allosteric effector GTP functions by stabilizing the protein conformation that binds the tetrahedral intermediate(s) formed during glutamine hydrolysis. Inhibited by the product CTP, via allosteric rather than competitive inhibition. Catalyzes the ATP-dependent amination of UTP to CTP with either L-glutamine or ammonia as the source of nitrogen. Regulates intracellular CTP levels through interactions with the four ribonucleotide triphosphates. The polypeptide is CTP synthase (Psychrobacter sp. (strain PRwf-1)).